Reading from the N-terminus, the 139-residue chain is Acidic phospholipase A2 Ts-A4 (139 aa).

The first 16 residues, 1–16, serve as a signal peptide directing secretion; it reads MRTLWILAVLLVGVEG. Intrachain disulfides connect C42–C132, C44–C60, C59–C111, C65–C139, C66–C104, C73–C97, and C91–C102. Residues Y43, G45, and G47 each coordinate Ca(2+). H63 is an active-site residue. A Ca(2+)-binding site is contributed by D64. The active site involves D105.

Ca(2+) is required as a cofactor. In terms of tissue distribution, expressed by the venom gland.

It is found in the secreted. It catalyses the reaction a 1,2-diacyl-sn-glycero-3-phosphocholine + H2O = a 1-acyl-sn-glycero-3-phosphocholine + a fatty acid + H(+). Its function is as follows. PLA2 catalyzes the calcium-dependent hydrolysis of the 2-acyl groups in 3-sn-phosphoglycerides. This is Acidic phospholipase A2 Ts-A4 from Trimeresurus stejnegeri (Chinese green tree viper).